The chain runs to 103 residues: Nucleoid-associated protein CFF8240_0066 (103 aa).

The protein belongs to the YbaB/EbfC family. As to quaternary structure, homodimer.

It is found in the cytoplasm. Its subcellular location is the nucleoid. In terms of biological role, binds to DNA and alters its conformation. May be involved in regulation of gene expression, nucleoid organization and DNA protection. The chain is Nucleoid-associated protein CFF8240_0066 from Campylobacter fetus subsp. fetus (strain 82-40).